The primary structure comprises 479 residues: GTPase Obg (479 aa).

One can recognise an Obg domain in the interval 2-159; the sequence is PRFVDRVVIH…RDLTLELKTV (158 aa). The region spanning 160–340 is the OBG-type G domain; that stretch reads ADVGLVGFPS…LIFGLWQMVS (181 aa). GTP-binding positions include 166–173, 191–195, 212–215, 292–295, and 321–323; these read GFPSAGKS, FTTLV, DVPG, NKID, and STV. Mg(2+) contacts are provided by Ser-173 and Thr-193. In terms of domain architecture, OCT spans 358-436; sequence PVPVDDSGFD…IGEMTFDWEP (79 aa). Residues 438 to 479 form a disordered region; that stretch reads TPAGGHVAMSGRGTDVRLERSDRVGAAERKAARRQRRERDDD. The span at 451 to 467 shows a compositional bias: basic and acidic residues; sequence TDVRLERSDRVGAAERK.

This sequence belongs to the TRAFAC class OBG-HflX-like GTPase superfamily. OBG GTPase family. In terms of assembly, monomer. Mg(2+) is required as a cofactor.

Its subcellular location is the cytoplasm. Functionally, an essential GTPase which binds GTP, GDP and possibly (p)ppGpp with moderate affinity, with high nucleotide exchange rates and a fairly low GTP hydrolysis rate. Plays a role in control of the cell cycle, stress response, ribosome biogenesis and in those bacteria that undergo differentiation, in morphogenesis control. The sequence is that of GTPase Obg from Mycobacterium ulcerans (strain Agy99).